The chain runs to 393 residues: S-adenosylmethionine synthase (393 aa).

Position 9 (E9) interacts with Mg(2+). Position 15 (H15) interacts with ATP. Residue D17 participates in Mg(2+) binding. Residue E43 coordinates K(+). L-methionine is bound by residues E56 and Q99. Residues 167–169 (DGK), 235–238 (SGRF), D246, 252–253 (RK), A269, K273, and K277 each bind ATP. Residue D246 coordinates L-methionine. K277 lines the L-methionine pocket.

It belongs to the AdoMet synthase family. As to quaternary structure, homotetramer; dimer of dimers. Mn(2+) serves as cofactor. Requires Mg(2+) as cofactor. Co(2+) is required as a cofactor. The cofactor is K(+).

The protein resides in the cytoplasm. It carries out the reaction L-methionine + ATP + H2O = S-adenosyl-L-methionine + phosphate + diphosphate. Its pathway is amino-acid biosynthesis; S-adenosyl-L-methionine biosynthesis; S-adenosyl-L-methionine from L-methionine: step 1/1. With respect to regulation, increased activity in the presence of 25 percent acetonitrile, methanol or dimethylformamide. Functionally, catalyzes the formation of S-adenosylmethionine from methionine and ATP. The sequence is that of S-adenosylmethionine synthase from Acacia koa (Koa tree).